An 87-amino-acid polypeptide reads, in one-letter code: Small ribosomal subunit protein bS18 (87 aa).

This sequence belongs to the bacterial ribosomal protein bS18 family. Part of the 30S ribosomal subunit. Forms a tight heterodimer with protein bS6.

Functionally, binds as a heterodimer with protein bS6 to the central domain of the 16S rRNA, where it helps stabilize the platform of the 30S subunit. This Sulfurimonas denitrificans (strain ATCC 33889 / DSM 1251) (Thiomicrospira denitrificans (strain ATCC 33889 / DSM 1251)) protein is Small ribosomal subunit protein bS18.